The sequence spans 611 residues: MPEVADTCSLASPASVCRTQHLHLRCSVDFARRTLTGTAALTVQSQEENLRSLTLDTKDLTIEKVVINGQEVKYTLGESQGYKGSPMEISLPIALSKNQEIVIEISFETSPKSSALQWLTPEQTSGKQHPYLFSQCQAIHCRAILPCQDTPSVKLTYTAEVSVPKELVALMSAIRDGEAPDPEDPSRKIYRFNQRVPIPCYLIALVVGALESRQIGPRTLVWSEKEQVEKSANEFSETESMLKIAEDLGGPYVWGQYDLLVLPPSFPYGGMENPCLTFVTPTLLAGDKSLSNVIAHEISHSWTGNLVTNKTWDHFWLNEGHTVYLERHICGRLFGEKFRHFHALGGWGELQNTIKTFGESHPFTKLVVDLKDVDPDVAYSSIPYEKGFALLFYLEQLLGGPEVFLGFLKAYVKKFSYQSVTTDDWKSFLYSHFKDKVDLLNQVDWNTWLYAPGLPPVKPNYDVTLTNACIALSQRWVTAKEEDLSSFSIADLKDLSSHQLNEFLAQVLQKAPLPLGHIKRMQEVYNFNAINNSEIRFRWLRLCIQSKWEEAIPLALKMATEQGRMKFTRPLFKDLAAFDKSHDQAVHTYQEHKASMHPVTAMLVGRDLKVD.

An N6-acetyllysine modification is found at lysine 73. Residues 135–137 (QCQ) and 267–272 (PYGGME) each bind a peptide. Residue histidine 296 participates in Zn(2+) binding. Glutamate 297 acts as the Proton acceptor in catalysis. Zn(2+)-binding residues include histidine 300 and glutamate 319. Lysine 337 carries the N6-acetyllysine modification. Catalysis depends on tyrosine 384, which acts as the Proton donor. Residue lysine 414 is modified to N6-acetyllysine. Phosphoserine is present on serine 416. 564–566 (RMK) contributes to the a peptide binding site. Lysine 573 bears the N6-acetyllysine mark.

It belongs to the peptidase M1 family. Monomer. It depends on Zn(2+) as a cofactor. Post-translationally, phosphorylation at Ser-416 inhibits leukotriene-A4 hydrolase activity.

It is found in the cytoplasm. The catalysed reaction is leukotriene A4 + H2O = leukotriene B4. It catalyses the reaction (5S,6S)-epoxy-(18R)-hydroxy-(7E,9E,11Z,14Z,16E)-eicosapentaenoate + H2O = resolvin E1. The enzyme catalyses (5S,6S)-epoxy-(18S)-hydroxy-(7E,9E,11Z,14Z,16E)-eicosapentaenoate + H2O = 18S-resolvin E1. It carries out the reaction Release of the N-terminal residue from a tripeptide.. It participates in lipid metabolism; leukotriene B4 biosynthesis. Inhibited by bestatin. The epoxide hydrolase activity is restrained by suicide inactivation that involves binding of LTA4 to Tyr-379. 4-(4-benzylphenyl)thiazol-2-amine (ARM1) selectively inhibits the epoxide hydrolase activity. In terms of biological role, bifunctional zinc metalloenzyme that comprises both epoxide hydrolase (EH) and aminopeptidase activities. Acts as an epoxide hydrolase to catalyze the conversion of LTA4 to the pro-inflammatory mediator leukotriene B4 (LTB4). Also has aminopeptidase activity, with high affinity for N-terminal arginines of various synthetic tripeptides. In addition to its pro-inflammatory EH activity, may also counteract inflammation by its aminopeptidase activity, which inactivates by cleavage another neutrophil attractant, the tripeptide Pro-Gly-Pro (PGP), a bioactive fragment of collagen generated by the action of matrix metalloproteinase-9 (MMP9) and prolylendopeptidase (PREPL). Involved also in the biosynthesis of resolvin E1 and 18S-resolvin E1 from eicosapentaenoic acid, two lipid mediators that show potent anti-inflammatory and pro-resolving actions. The chain is Leukotriene A-4 hydrolase (Lta4h) from Mus musculus (Mouse).